Here is a 163-residue protein sequence, read N- to C-terminus: uncharacterized protein (163 aa).

This is an uncharacterized protein from Dictyostelium discoideum (Social amoeba).